An 826-amino-acid polypeptide reads, in one-letter code: Putative pentatricopeptide repeat-containing protein At1g13630 (826 aa).

16 PPR repeats span residues 228–262, 263–297, 298–332, 333–367, 368–402, 404–438, 439–473, 474–508, 509–543, 544–578, 579–613, 614–648, 661–695, 696–730, 731–765, and 766–800; these read NEHTYSTVVDGLCRQQKLEDAVLFLRTSEWKDIGP, SVVSFNSIMSGYCKLGFVDMAKSFFCTVLKCGLVP, SVYSHNILINGLCLVGSIAEALELASDMNKHGVEP, DSVTYNILAKGFHLLGMISGAWEVIRDMLDKGLSP, DVITYTILLCGQCQLGNIDMGLVLLKDMLSRGFEL, SIIPCSVMLSGLCKTGRIDEALSLFNQMKADGLSP, DLVAYSIVIHGLCKLGKFDMALWLYDEMCDKRILP, NSRTHGALLLGLCQKGMLLEARSLLDSLISSGETL, DIVLYNIVIDGYAKSGCIEEALELFKVVIETGITP, SVATFNSLIYGYCKTQNIAEARKILDVIKLYGLAP, SVVSYTTLMDAYANCGNTKSIDELRREMKAEGIPP, TNVTYSVIFKGLCRGWKHENCNHVLRERIFEKCKQ, DQITYNTIIQYLCRVKHLSGAFVFLEIMKSRNLDA, SSATYNILIDSLCVYGYIRKADSFIYSLQEQNVSL, SKFAYTTLIKAHCVKGDPEMAVKLFHQLLHRGFNV, and SIRDYSAVINRLCRRHLVNESKFFFCLMLSQGISP.

This sequence belongs to the PPR family. P subfamily.

This Arabidopsis thaliana (Mouse-ear cress) protein is Putative pentatricopeptide repeat-containing protein At1g13630.